The chain runs to 314 residues: DNA-directed RNA polymerase subunit alpha (314 aa).

Residues 1–228 (MIEIEKPRIE…EHLNIFVDLT (228 aa)) are alpha N-terminal domain (alpha-NTD). The segment at 245 to 314 (KEKVLEMSIE…DLGLGLRKED (70 aa)) is alpha C-terminal domain (alpha-CTD).

Belongs to the RNA polymerase alpha chain family. Homodimer. The RNAP catalytic core consists of 2 alpha, 1 beta, 1 beta' and 1 omega subunit. When a sigma factor is associated with the core the holoenzyme is formed, which can initiate transcription.

It catalyses the reaction RNA(n) + a ribonucleoside 5'-triphosphate = RNA(n+1) + diphosphate. DNA-dependent RNA polymerase catalyzes the transcription of DNA into RNA using the four ribonucleoside triphosphates as substrates. This chain is DNA-directed RNA polymerase subunit alpha, found in Macrococcus caseolyticus (strain JCSC5402) (Macrococcoides caseolyticum).